Consider the following 361-residue polypeptide: Cell cycle control protein 50A (361 aa).

Residues 1–28 (MAMNYNAKDEVDGGPPCPPGGTAKTRRP) are disordered. Residue A2 is modified to N-acetylalanine. A required for ATPase and aminophospholipid flippase activity region spans residues 2–48 (AMNYNAKDEVDGGPPCPPGGTAKTRRPDNTAFKQQRLPAWQPILTAG). At 2–49 (AMNYNAKDEVDGGPPCPPGGTAKTRRPDNTAFKQQRLPAWQPILTAGT) the chain is on the cytoplasmic side. The tract at residues 49–348 (TVLPTFFIIG…LGVVLLVINH (300 aa)) is interaction with ATP8A2. A helical transmembrane segment spans residues 50-70 (VLPTFFIIGLIFIPIGIGIFV). The Exoplasmic loop portion of the chain corresponds to 71–325 (TSNNIREIEI…SWMGGKNPFL (255 aa)). 3 disulfides stabilise this stretch: C91-C104, C94-C102, and C157-C171. N-linked (GlcNAc...) asparagine glycosylation is found at N180, N190, and N294. A helical transmembrane segment spans residues 326–346 (GIAYITIGSISFLLGVVLLVI). The Cytoplasmic segment spans residues 347 to 361 (NHKYRNSSNTADITI).

This sequence belongs to the CDC50/LEM3 family. As to quaternary structure, component of various P4-ATPase flippase complexes which consists of a catalytic alpha subunit and an accessory beta subunit. Interacts with ATP8A1 to form a flippase complex; this complex forms an intermediate phosphoenzyme. Interacts with ATP8A2 to form a flippase complex. ATP8B1:TMEM30A and ATP8B2:TMEM30A flippase complexes have been shown to form intermediate phosphoenzymes in vitro. Interacts with alpha subunits ATP8A1, ATP8B1, ATP8B2, ATP8B4, ATP10A, ATP10B, ATP10D, ATP11A, ATP11B and ATP11C. N-glycosylated; contributes to ATP8A2:TMEM30A flippase complex assembly but not to functional activity. As to expression, expressed in photoreceptor cells; detected in retina outer segment and other retinal layers (at protein level).

It is found in the membrane. Its subcellular location is the golgi apparatus. The protein localises to the cytoplasmic vesicle. The protein resides in the secretory vesicle membrane. It localises to the apical cell membrane. It is found in the photoreceptor inner segment. Its subcellular location is the cell projection. The protein localises to the cilium. The protein resides in the photoreceptor outer segment. Accessory component of a P4-ATPase flippase complex which catalyzes the hydrolysis of ATP coupled to the transport of aminophospholipids from the outer to the inner leaflet of various membranes and ensures the maintenance of asymmetric distribution of phospholipids. Phospholipid translocation also seems to be implicated in vesicle formation and in uptake of lipid signaling molecules. The beta subunit may assist in binding of the phospholipid substrate. Required for the proper folding, assembly and ER to Golgi exit of the ATP8A2:TMEM30A flippase complex. ATP8A2:TMEM30A may be involved in regulation of neurite outgrowth, and, reconstituted to liposomes, predomiminantly transports phosphatidylserine (PS) and to a lesser extent phosphatidylethanolamine (PE). The ATP8A1:TMEM30A flippase complex seems to play a role in regulation of cell migration probably involving flippase-mediated translocation of phosphatidylethanolamine (PE) at the plasma membrane. Required for the formation of the ATP8A2, ATP8B1 and ATP8B2 P-type ATPAse intermediate phosphoenzymes. Involved in uptake of platelet-activating factor (PAF). Can also mediate the export of alpha subunits ATP8A1, ATP8B1, ATP8B2, ATP8B4, ATP10A, ATP10B, ATP10D, ATP11A, ATP11B and ATP11C from the ER to other membrane localizations. The protein is Cell cycle control protein 50A of Bos taurus (Bovine).